Consider the following 625-residue polypeptide: MDFKYDVIVIGAGHAGCEAAAAAANLGSKTCLITMDMNKVAQMSCNPAVGGIAKGQIVREIDALGGYMGLVTDQTAIQFRILNRSKGPAMWSPRAQCDRNKFIWAWREILENIPNLHIWQDTVKEIIVENGEVVGLKTFWDVTFHARCIVLTAGTFLNGLMHVGKTQLPGGRMAEPASYKLTESIAKHGIEYGRMKTGTPVRIDGRSVHYELMDTQDGECDFHKFSFMNTSVRHLKQLQCWTCFTNEEAHNVLRNGLADSPLFNGQIQSIGPRYCPSIETKIVTFPDKEQHQLFLEPEGETTQELYLNGFSSSLPMEIQIEALKKIPAFKDLVIYRPGYAIEYDYFDPTQLKHTLESKKIKNLFFAGQVNGTTGYEEAGGQGIIAGINAHINCHGGEPFTLARDEAYIGVLIDDLVTKGVDEPYRMFTSRAEYRILLRMDDADMRLTERAYKLGLVKEDRYALLKSKREAVENIVNFTRNYSIKAALINDALENLGTTPLRQGCKLIDLINRPQITIENISEYVPAFKRELDKITDERKEEILEAAEILIKYEGYIGRERIIADKLARLESIKIKGKFDYDSLQSLSTEARQKLKKIDPETIAQASRIPGVSPSDINVLLVLSGR.

Residues 11-16 (GAGHAG), V123, and S178 contribute to the FAD site. 271–285 (GPRYCPSIETKIVTF) is an NAD(+) binding site. FAD is bound at residue Q368.

It belongs to the MnmG family. As to quaternary structure, homodimer. Heterotetramer of two MnmE and two MnmG subunits. FAD serves as cofactor.

It localises to the cytoplasm. NAD-binding protein involved in the addition of a carboxymethylaminomethyl (cmnm) group at the wobble position (U34) of certain tRNAs, forming tRNA-cmnm(5)s(2)U34. This chain is tRNA uridine 5-carboxymethylaminomethyl modification enzyme MnmG, found in Bacteroides fragilis (strain YCH46).